The following is a 310-amino-acid chain: uncharacterized protein (310 aa).

3 disordered regions span residues 1–53 (MSNK…NKEM), 78–127 (PIEN…TITN), and 153–217 (QQPL…SQML). A compositionally biased stretch (acidic residues) spans 11 to 25 (GEEDEEEDDLYDDYD). Composition is skewed to polar residues over residues 37–49 (STSMNKSDSNISL) and 78–88 (PIENINENPSP). Composition is skewed to low complexity over residues 94-126 (QTQQTQPQQNPISPITPLSSSSPSSSTTTTTIT), 164-184 (PSPIILQHQQQQQPLQSQYIT), and 192-208 (YQPIASQQSQQPQQIPT). The stretch at 268–299 (DLIKSVQHNIRQYNDDILTLEEKLEQTEWSLQ) forms a coiled coil.

This is an uncharacterized protein from Dictyostelium discoideum (Social amoeba).